The primary structure comprises 190 residues: MRAFKVKRDTNETKIQLELNIDGTGKYSITTGIPFFDHVLSSFAKHGSFDLKLDVLGDLEIDDHHTVEDVGIVLGKAFENMEKKNIKRFGWAIIPMDEAKATVSIDIGGRPFVVGNYVPNTERIGSFSTENVVHFFESFSNNAKINLHFEVTGENEHHKVEALFKAFGVAMDMATQIDERKGIVSTKGVI.

It belongs to the imidazoleglycerol-phosphate dehydratase family.

It localises to the cytoplasm. It catalyses the reaction D-erythro-1-(imidazol-4-yl)glycerol 3-phosphate = 3-(imidazol-4-yl)-2-oxopropyl phosphate + H2O. The protein operates within amino-acid biosynthesis; L-histidine biosynthesis; L-histidine from 5-phospho-alpha-D-ribose 1-diphosphate: step 6/9. The protein is Imidazoleglycerol-phosphate dehydratase of Methanococcus maripaludis (strain DSM 14266 / JCM 13030 / NBRC 101832 / S2 / LL).